We begin with the raw amino-acid sequence, 318 residues long: Small ribosomal subunit protein uS2 (318 aa).

This sequence belongs to the universal ribosomal protein uS2 family.

This Mesomycoplasma hyopneumoniae (strain J / ATCC 25934 / NCTC 10110) (Mycoplasma hyopneumoniae) protein is Small ribosomal subunit protein uS2.